The chain runs to 94 residues: Co-chaperonin GroES (94 aa).

This sequence belongs to the GroES chaperonin family. Heptamer of 7 subunits arranged in a ring. Interacts with the chaperonin GroEL.

The protein resides in the cytoplasm. Its function is as follows. Together with the chaperonin GroEL, plays an essential role in assisting protein folding. The GroEL-GroES system forms a nano-cage that allows encapsulation of the non-native substrate proteins and provides a physical environment optimized to promote and accelerate protein folding. GroES binds to the apical surface of the GroEL ring, thereby capping the opening of the GroEL channel. The sequence is that of Co-chaperonin GroES from Clostridium botulinum (strain Eklund 17B / Type B).